The following is a 521-amino-acid chain: T-box transcription factor TBX5 (521 aa).

Positions 1 to 45 are disordered; it reads MADTEEGFGLPSTPVDSEAKELQAEAKQDPQLGTTSKAPTSPQAA. Basic and acidic residues predominate over residues 17–28; it reads SEAKELQAEAKQ. The span at 31–45 shows a compositional bias: polar residues; sequence QLGTTSKAPTSPQAA. A DNA-binding region (T-box) is located at residues 63–238; it reads LWLKFHEVGT…NNPFAKGFRG (176 aa). 2 disordered regions span residues 254–281 and 332–352; these read EYPV…TRVL and STTE…EEDP. A compositionally biased stretch (polar residues) spans 262–281; it reads TVRQKVSSNHSPFSGETRVL.

Monomer. Homodimer (via the T-box); binds DNA as homodimer.

Its subcellular location is the nucleus. It is found in the cytoplasm. DNA-binding protein that regulates the transcription of several genes and is involved in heart development and limb pattern formation. May bind to the core DNA motif of promoters. In Gallus gallus (Chicken), this protein is T-box transcription factor TBX5 (TBX5).